The following is a 296-amino-acid chain: Low affinity immunoglobulin gamma Fc region receptor II (296 aa).

The N-terminal stretch at 1–42 is a signal peptide; that stretch reads MGIPSFLAFPAARRNRAHCTPWHPWGHMLLWTALLFLAPVSG. Residues 43–225 lie on the Extracellular side of the membrane; that stretch reads KPDLPKAVVT…SSSSGPSSMT (183 aa). 2 Ig-like C2-type domains span residues 47–129 and 130–212; these read PKAV…DVIS and DWLL…VNIT. 2 disulfides stabilise this stretch: Cys-70–Cys-112 and Cys-151–Cys-195. N-linked (GlcNAc...) asparagine glycosylation is found at Asn-79, Asn-86, Asn-105, Asn-179, Asn-186, and Asn-210. A helical transmembrane segment spans residues 226 to 246; it reads AVAIGTCFAAVAIVAAIITWF. Residues 247–296 are Cytoplasmic-facing; that stretch reads RLRRKPISAGLTDAENDAARTEAENTVTYSLLSHPDVAEEDSESDYQKRL. The short motif at 273 to 278 is the ITIM motif element; the sequence is VTYSLL. Residue Tyr-275 is modified to Phosphotyrosine; by SRC-type Tyr-kinases. Residue Ser-288 is modified to Phosphoserine. Tyr-292 carries the phosphotyrosine modification.

As to quaternary structure, interacts with FGR and LYN. In terms of processing, phosphorylated by SRC-type Tyr-kinases such as LYN, BLK, FYN and SYK. As to expression, higher expression is found in macrophages than in neutrophils.

Its subcellular location is the cell membrane. Its function is as follows. Binds to the Fc region of immunoglobulins gamma. Low affinity receptor. This chain is Low affinity immunoglobulin gamma Fc region receptor II (FCGR2), found in Bos taurus (Bovine).